The primary structure comprises 162 residues: Meiosis-specific protein HED1 (162 aa).

The interval 67–124 (KNLSENTGGGSPNGGAYLDAKKGVREQDQYQGGPSKELDRLQPPPSMKKSPPRKKKSL) is disordered. Basic and acidic residues predominate over residues 85 to 94 (DAKKGVREQD).

In terms of assembly, interacts with RAD51.

The protein resides in the nucleus. It is found in the chromosome. Functionally, involved in regulation of meiotic recombination and repair of DNA damage. Inhibits RAD51-mediated recombination when the meiotic recombination machinery is impaired. In Saccharomyces cerevisiae (strain ATCC 204508 / S288c) (Baker's yeast), this protein is Meiosis-specific protein HED1 (HED1).